The primary structure comprises 394 residues: Enoyl-[acyl-carrier-protein] reductase [NADH] (394 aa).

Residues 48 to 53 (GASTGY), 74 to 75 (YE), 111 to 112 (DA), and 139 to 140 (LA) each bind NAD(+). Tyr-225 serves as a coordination point for substrate. Tyr-235 functions as the Proton donor in the catalytic mechanism. NAD(+)-binding positions include Lys-244 and 273–275 (LVT).

The protein belongs to the TER reductase family. Monomer.

The enzyme catalyses a 2,3-saturated acyl-[ACP] + NAD(+) = a (2E)-enoyl-[ACP] + NADH + H(+). It participates in lipid metabolism; fatty acid biosynthesis. Involved in the final reduction of the elongation cycle of fatty acid synthesis (FAS II). Catalyzes the reduction of a carbon-carbon double bond in an enoyl moiety that is covalently linked to an acyl carrier protein (ACP). The chain is Enoyl-[acyl-carrier-protein] reductase [NADH] from Opitutus terrae (strain DSM 11246 / JCM 15787 / PB90-1).